An 856-amino-acid chain; its full sequence is Beta-galactosidase 3 (856 aa).

Residues 1–31 form the signal peptide; sequence MREMGTGDSASRLILWFCLGFLILGVGFVQC. The Proton donor role is filled by Glu-189. Glu-258 serves as the catalytic Nucleophile. Asn-468 carries N-linked (GlcNAc...) asparagine glycosylation. The 87-residue stretch at 760–846 folds into the SUEL-type lectin domain; the sequence is TFHRPKVHLK…KRLTVEAVCA (87 aa).

This sequence belongs to the glycosyl hydrolase 35 family. As to expression, ubiquitous.

The protein resides in the secreted. It is found in the extracellular space. It localises to the apoplast. The catalysed reaction is Hydrolysis of terminal non-reducing beta-D-galactose residues in beta-D-galactosides.. This chain is Beta-galactosidase 3 (BGAL3), found in Arabidopsis thaliana (Mouse-ear cress).